We begin with the raw amino-acid sequence, 182 residues long: Probable peptidyl-prolyl cis-trans isomerase A (182 aa).

The 169-residue stretch at 13–181 (ATATATLHTN…DPVVIESITI (169 aa)) folds into the PPIase cyclophilin-type domain.

This sequence belongs to the cyclophilin-type PPIase family.

It is found in the cytoplasm. The enzyme catalyses [protein]-peptidylproline (omega=180) = [protein]-peptidylproline (omega=0). PPIases accelerate the folding of proteins. It catalyzes the cis-trans isomerization of proline imidic peptide bonds in oligopeptides. The polypeptide is Probable peptidyl-prolyl cis-trans isomerase A (ppiA) (Mycobacterium bovis (strain ATCC BAA-935 / AF2122/97)).